Here is a 141-residue protein sequence, read N- to C-terminus: Hemoglobin subunit alpha (141 aa).

Positions 1-141 (VLSGTDKSNI…VSTVLTSKYR (141 aa)) constitute a Globin domain. Ser3 carries the post-translational modification Phosphoserine. Lys7 and Lys11 each carry N6-succinyllysine. Lys16 carries the N6-acetyllysine; alternate modification. At Lys16 the chain carries N6-succinyllysine; alternate. At Tyr24 the chain carries Phosphotyrosine. Ser35 is subject to Phosphoserine. An N6-succinyllysine modification is found at Lys40. The residue at position 49 (Ser49) is a Phosphoserine. An O2-binding site is contributed by His58. A heme b-binding site is contributed by His87. Ser102 bears the Phosphoserine mark. The residue at position 108 (Thr108) is a Phosphothreonine. Position 124 is a phosphoserine (Ser124). Thr134 and Thr137 each carry phosphothreonine. The residue at position 138 (Ser138) is a Phosphoserine.

It belongs to the globin family. Heterotetramer of two alpha chains and two beta chains. As to expression, red blood cells.

In terms of biological role, involved in oxygen transport from the lung to the various peripheral tissues. Hemopressin acts as an antagonist peptide of the cannabinoid receptor CNR1. Hemopressin-binding efficiently blocks cannabinoid receptor CNR1 and subsequent signaling. The polypeptide is Hemoglobin subunit alpha (HBA) (Talpa europaea (European mole)).